The sequence spans 905 residues: Alanine--tRNA ligase (905 aa).

Zn(2+) is bound by residues His569, His573, Cys693, and His697.

The protein belongs to the class-II aminoacyl-tRNA synthetase family. Requires Zn(2+) as cofactor.

It localises to the cytoplasm. The catalysed reaction is tRNA(Ala) + L-alanine + ATP = L-alanyl-tRNA(Ala) + AMP + diphosphate. In terms of biological role, catalyzes the attachment of alanine to tRNA(Ala) in a two-step reaction: alanine is first activated by ATP to form Ala-AMP and then transferred to the acceptor end of tRNA(Ala). Also edits incorrectly charged Ser-tRNA(Ala) and Gly-tRNA(Ala) via its editing domain. This Roseiflexus castenholzii (strain DSM 13941 / HLO8) protein is Alanine--tRNA ligase.